The sequence spans 520 residues: MGMRLSRRDKIARMLLIWAALAAVALVLVGCIRVVGGRARMAEPKLGQPVEWTPCRSSNPQVKIPGGALCGKLAVPVDYDRPDGDVAALALIRFPATGDKIGSLVINPGGPGESGIEAALGVFQTLPKRVHERFDLVGFDPRGVASSRPAIWCNSDADNDRLRAEPQVDYSREGVAHIENETKQFVGRCVDKMGKNFLAHVGTVNVAKDLDAIRAALGDDKLTYLGYSYGTRIGSAYAEEFPQRVRAMILDGAVDPNADPIEAELRQAKGFQDAFNNYAADCAKNAGCPLGADPAKAVEVYHSLVDPLVDPDNPRISRPARTKDPRGLSYSDAIVGTIMALYSPNLWQHLTDGLSELVDNRGDTLLALADMYMRRDSHGRYNNSGDARVAINCVDQPPVTDRDKVIDEDRRAREIAPFMSYGKFTGDAPLGTCAFWPVPPTSQPHAVSAPGLVPTVVVSTTHDPATPYKAGVDLANQLRGSLLTFDGTQHTVVFQGDSCIDEYVTAYLIGGTTPPSGAKC.

The signal sequence occupies residues 1–30 (MGMRLSRRDKIARMLLIWAALAAVALVLVG). Cys-31 carries the N-palmitoyl cysteine lipid modification. Cys-31 is lipidated: S-diacylglycerol cysteine. The AB hydrolase-1 domain occupies 102–497 (GSLVINPGGP…TQHTVVFQGD (396 aa)). Ser-228 functions as the Nucleophile in the catalytic mechanism. Asp-463 is an active-site residue. The active-site Proton donor is His-490.

The protein belongs to the peptidase S33 family.

Its subcellular location is the cell envelope. It is found in the cell membrane. Its function is as follows. Serine protease that promotes pathogenesis by promoting the processing and the extracellular release of the M.bovis heat-shock protein GroEL2. Key immunomodulatory virulence factor, which promotes survival in host macrophages and modulates host immune responses. The protein is Serine protease Hip1 of Mycobacterium bovis (strain ATCC BAA-935 / AF2122/97).